Here is a 245-residue protein sequence, read N- to C-terminus: tRNA (guanine-N(1)-)-methyltransferase (245 aa).

Residues G114 and 133–138 each bind S-adenosyl-L-methionine; that span reads IGDYVL.

It belongs to the RNA methyltransferase TrmD family. In terms of assembly, homodimer.

The protein localises to the cytoplasm. The catalysed reaction is guanosine(37) in tRNA + S-adenosyl-L-methionine = N(1)-methylguanosine(37) in tRNA + S-adenosyl-L-homocysteine + H(+). Functionally, specifically methylates guanosine-37 in various tRNAs. This Prochlorococcus marinus (strain MIT 9312) protein is tRNA (guanine-N(1)-)-methyltransferase.